The sequence spans 424 residues: Imidazolonepropionase (424 aa).

Fe(3+) contacts are provided by H84 and H86. Residues H84 and H86 each coordinate Zn(2+). Positions 93, 156, and 189 each coordinate 4-imidazolone-5-propanoate. Y156 provides a ligand contact to N-formimidoyl-L-glutamate. H254 contacts Fe(3+). H254 is a binding site for Zn(2+). 4-imidazolone-5-propanoate is bound at residue E257. D328 lines the Fe(3+) pocket. Residue D328 participates in Zn(2+) binding. 2 residues coordinate N-formimidoyl-L-glutamate: N330 and G332. S333 is a 4-imidazolone-5-propanoate binding site.

Belongs to the metallo-dependent hydrolases superfamily. HutI family. Requires Zn(2+) as cofactor. It depends on Fe(3+) as a cofactor.

Its subcellular location is the cytoplasm. It carries out the reaction 4-imidazolone-5-propanoate + H2O = N-formimidoyl-L-glutamate. Its pathway is amino-acid degradation; L-histidine degradation into L-glutamate; N-formimidoyl-L-glutamate from L-histidine: step 3/3. Functionally, catalyzes the hydrolytic cleavage of the carbon-nitrogen bond in imidazolone-5-propanoate to yield N-formimidoyl-L-glutamate. It is the third step in the universal histidine degradation pathway. This is Imidazolonepropionase from Geobacillus kaustophilus (strain HTA426).